A 509-amino-acid polypeptide reads, in one-letter code: Scavenger receptor class B member 1 (509 aa).

The Cytoplasmic portion of the chain corresponds to 1 to 11 (MGGSARARWVA). Residues 12–32 (VGLGVVGLLCAVLGVVMILVM) traverse the membrane as a helical segment. Residues 33-440 (PSLIKQQVLK…YTQLVLMPQV (408 aa)) are Extracellular-facing. N-linked (GlcNAc...) asparagine glycans are attached at residues asparagine 102, asparagine 108, asparagine 173, asparagine 212, asparagine 227, asparagine 255, asparagine 310, asparagine 330, and asparagine 383. Residues cysteine 251 and cysteine 384 are joined by a disulfide bond. Residues 441-461 (LQYVQYVLLGLGGLLLLVPVI) traverse the membrane as a helical segment. Over 462–509 (YQLRSQEKCFLFWSGSKKGSQDKEAIQAYSESLMSPAAKGTVLQEAKL) the chain is Cytoplasmic.

The protein belongs to the CD36 family. Post-translationally, N-glycosylated. In terms of processing, the six cysteines of the extracellular domain are all involved in intramolecular disulfide bonds.

The protein resides in the cell membrane. It is found in the membrane. Its subcellular location is the caveola. Its function is as follows. Receptor for different ligands such as phospholipids, cholesterol ester, lipoproteins, phosphatidylserine and apoptotic cells. Receptor for HDL, mediating selective uptake of cholesteryl ether and HDL-dependent cholesterol efflux. Also facilitates the flux of free and esterified cholesterol between the cell surface and apoB-containing lipoproteins and modified lipoproteins, although less efficiently than HDL. May be involved in the phagocytosis of apoptotic cells, via its phosphatidylserine binding activity. The sequence is that of Scavenger receptor class B member 1 (SCARB1) from Cricetulus griseus (Chinese hamster).